We begin with the raw amino-acid sequence, 117 residues long: UPF0251 protein DET0218 (117 aa).

The protein belongs to the UPF0251 family.

In Dehalococcoides mccartyi (strain ATCC BAA-2266 / KCTC 15142 / 195) (Dehalococcoides ethenogenes (strain 195)), this protein is UPF0251 protein DET0218.